A 412-amino-acid polypeptide reads, in one-letter code: Protein ALF (412 aa).

Disordered stretches follow at residues 1 to 47 (MDPE…PLPP) and 154 to 234 (GLSE…GISE). Over residues 31–47 (PPQPPPPPLPPPQPLPP) the composition is skewed to pro residues. Over residues 187–196 (MRQRRRKKVV) the composition is skewed to basic residues. The span at 206 to 221 (MEEDEDTEEGQEDNED) shows a compositional bias: acidic residues. DNA-binding regions lie at residues 237–241 (REHPF), 306–313 (NKPKMRHY), and 377–380 (YVPT).

The protein belongs to the FLO/LFY family. As to expression, expressed in the floral meristem and also in the vegetative meristem.

It localises to the nucleus. Its function is as follows. Probable transcription factor required for the specification of floral meristem identity. The sequence is that of Protein ALF (ALF) from Petunia hybrida (Petunia).